A 314-amino-acid chain; its full sequence is Nitrilase 2 (314 aa).

The CN hydrolase domain maps to 7–269 (VTLGVAQAAP…ETLITARVST (263 aa)). Glutamate 47 serves as the catalytic Proton acceptor. The Proton donor role is filled by lysine 132. Catalysis depends on cysteine 166, which acts as the Nucleophile.

Belongs to the carbon-nitrogen hydrolase superfamily. Nitrilase family.

The enzyme catalyses a nitrile + 2 H2O = a carboxylate + NH4(+). Its function is as follows. Nitrilases catalyze the mild hydrolytic conversion of organonitriles directly to the corresponding carboxylic acids. Catalyzes the production of aryllactic acid derivatives. Mediates the hydrolysis of cyanohydrin to (S)-phenyllactic acid. The chain is Nitrilase 2 from Unknown prokaryotic organism.